The primary structure comprises 577 residues: Laccase-17 (577 aa).

Positions 1-22 (MALQLLLAVFSCVLLLPQPAFG) are cleaved as a signal peptide. Plastocyanin-like domains lie at 30 to 146 (EIKM…PKRG) and 156 to 309 (KEVP…YEPP). Residues Asn-35 and Asn-76 are each glycosylated (N-linked (GlcNAc...) asparagine). Residues His-80 and His-82 each coordinate Cu cation. Asn-112 carries an N-linked (GlcNAc...) asparagine glycan. Residues His-125 and His-127 each contribute to the Cu cation site. 12 N-linked (GlcNAc...) asparagine glycosylation sites follow: Asn-185, Asn-201, Asn-237, Asn-297, Asn-335, Asn-383, Asn-391, Asn-401, Asn-437, Asn-444, Asn-450, and Asn-460. Positions 427–561 (KFPWSPIVPF…RMAWLVLDGD (135 aa)) constitute a Plastocyanin-like 3 domain. Residues His-478, His-481, His-483, His-540, Cys-541, His-542, and His-546 each contribute to the Cu cation site.

The protein belongs to the multicopper oxidase family. The cofactor is Cu cation. Ubiquitous with higher levels in the inflorescence stem.

The protein localises to the secreted. Its subcellular location is the extracellular space. It localises to the apoplast. The enzyme catalyses 4 hydroquinone + O2 = 4 benzosemiquinone + 2 H2O. Functionally, lignin degradation and detoxification of lignin-derived products. The polypeptide is Laccase-17 (LAC17) (Arabidopsis thaliana (Mouse-ear cress)).